The following is a 409-amino-acid chain: Lissencephaly-1 homolog (409 aa).

A LisH domain is found at 7-39 (RRERSNQAIADYLGSNGYTDALEAFRKEADMPN). Positions 54-81 (TSVIRLQKKVMELEAKLSEAEKEAIEGA) form a coiled coil. WD repeat units lie at residues 104-145 (GHRA…RTLK), 146-185 (GHTD…ECVK), 189-228 (GHDH…CVKT), 231-270 (GHRE…CKAE), 273-332 (EHEN…CLFT), 335-374 (GHDN…CMKT), and 377-409 (AHSH…WECR).

It belongs to the WD repeat LIS1/nudF family.

It localises to the cytoplasm. Its subcellular location is the cytoskeleton. The protein localises to the microtubule organizing center. It is found in the centrosome. In terms of biological role, positively regulates the activity of the minus-end directed microtubule motor protein dynein. May enhance dynein-mediated microtubule sliding by targeting dynein to the microtubule plus end. Required for several dynein- and microtubule-dependent processes. This chain is Lissencephaly-1 homolog, found in Aedes aegypti (Yellowfever mosquito).